The chain runs to 833 residues: DNA ligase (833 aa).

NAD(+) is bound by residues 35-39 (DADYD), 84-85 (SL), and Glu-115. Lys-117 acts as the N6-AMP-lysine intermediate in catalysis. Positions 138, 175, 292, and 316 each coordinate NAD(+). Positions 410, 413, 428, and 434 each coordinate Zn(2+). The BRCT domain maps to 750–833 (EKTGPLDGQT…AFLGDHGQQP (84 aa)).

The protein belongs to the NAD-dependent DNA ligase family. LigA subfamily. Mg(2+) serves as cofactor. Requires Mn(2+) as cofactor.

The enzyme catalyses NAD(+) + (deoxyribonucleotide)n-3'-hydroxyl + 5'-phospho-(deoxyribonucleotide)m = (deoxyribonucleotide)n+m + AMP + beta-nicotinamide D-nucleotide.. In terms of biological role, DNA ligase that catalyzes the formation of phosphodiester linkages between 5'-phosphoryl and 3'-hydroxyl groups in double-stranded DNA using NAD as a coenzyme and as the energy source for the reaction. It is essential for DNA replication and repair of damaged DNA. This Xanthomonas axonopodis pv. citri (strain 306) protein is DNA ligase.